The following is a 117-amino-acid chain: UPF0102 protein RHOS4_03930 (117 aa).

The protein belongs to the UPF0102 family.

The protein is UPF0102 protein RHOS4_03930 of Cereibacter sphaeroides (strain ATCC 17023 / DSM 158 / JCM 6121 / CCUG 31486 / LMG 2827 / NBRC 12203 / NCIMB 8253 / ATH 2.4.1.) (Rhodobacter sphaeroides).